The primary structure comprises 513 residues: MKNLLTNPQPSQSDYINAIVKLGSRVYEAAQVTPLQKMGKLSERLHNNIWIKREDRQPVNSFKLRGAYAMISSLSAEQKAAGVIAASAGNHAQGVALSAKQLGLKALIVMPQNTPSIKVDAVRGFGGEVLLHGANFDEAKAKAIELSKEKNMTFIPPFDHPLVIAGQGTLAMEMLQQVADLDYVFVQVGGGGLAAGVAILLKQFMPEIKIIGVESKDSACLKAALDKGEPTDLTHIGLFADGVAVKRIGDETFRLCQQYLDDMVLVDSDEVCAAMKDLFENVRAVAEPSGALGLAGLKKYVKQNHIEGKNMAAILSGANLNFHTLRYVSERCEIGENREALLAVTMPEQPGSFLKFAYVLGNRAVTEFSYRYADDKRACVFVGVRTTNEQEKADIIADLTKNGFDVEDMSDDDIAKTHVRYLMGGRAANDNERLYTFEFPEQKGALLKFLETLQNRWNISLFHYRAHGADYGNILAGFQIEQREQAEFEQGLAQLNYVFEDVTKSKSYRYFLR.

K63 is modified (N6-(pyridoxal phosphate)lysine). Pyridoxal 5'-phosphate is bound by residues N90, 189-193, and S316; that span reads GGGGL. 2 ACT-like domains span residues 340–411 and 433–504; these read ALLA…DMSD and RLYT…DVTK.

It belongs to the serine/threonine dehydratase family. Homotetramer. The cofactor is pyridoxal 5'-phosphate.

The catalysed reaction is L-threonine = 2-oxobutanoate + NH4(+). It participates in amino-acid biosynthesis; L-isoleucine biosynthesis; 2-oxobutanoate from L-threonine: step 1/1. In terms of biological role, catalyzes the anaerobic formation of alpha-ketobutyrate and ammonia from threonine in a two-step reaction. The first step involved a dehydration of threonine and a production of enamine intermediates (aminocrotonate), which tautomerizes to its imine form (iminobutyrate). Both intermediates are unstable and short-lived. The second step is the nonenzymatic hydrolysis of the enamine/imine intermediates to form 2-ketobutyrate and free ammonia. In the low water environment of the cell, the second step is accelerated by RidA. This Haemophilus influenzae (strain ATCC 51907 / DSM 11121 / KW20 / Rd) protein is L-threonine dehydratase biosynthetic IlvA (ilvA).